We begin with the raw amino-acid sequence, 197 residues long: Lipid A acyltransferase PagP (197 aa).

Positions 1 to 24 (MMFFKRTILACTVALLFPALPSYA) are cleaved as a signal peptide. Residues His-69, Asp-112, and Ser-113 contribute to the active site.

The protein belongs to the lipid A palmitoyltransferase family. In terms of assembly, homodimer.

It is found in the cell outer membrane. It catalyses the reaction a lipid A + a 1,2-diacyl-sn-glycero-3-phosphocholine = a hepta-acyl lipid A + a 2-acyl-sn-glycero-3-phosphocholine. The enzyme catalyses a lipid IVA + a 1,2-diacyl-sn-glycero-3-phosphocholine = a lipid IVB + a 2-acyl-sn-glycero-3-phosphocholine. It carries out the reaction a lipid IIA + a 1,2-diacyl-sn-glycero-3-phosphocholine = a lipid IIB + a 2-acyl-sn-glycero-3-phosphocholine. Its function is as follows. Transfers a fatty acid residue from the sn-1 position of a phospholipid to the N-linked hydroxyfatty acid chain on the proximal unit of lipid A or its precursors. This is Lipid A acyltransferase PagP from Serratia proteamaculans (strain 568).